The chain runs to 355 residues: Cyclic nucleotide-gated potassium channel mll3241 (355 aa).

Topologically, residues 1-12 (MSVLPFLRIYAP) are cytoplasmic. A helical transmembrane segment spans residues 13-30 (LNAVLAAPGLLAVAALTI). Residues 31–38 (PDMSGRSR) are Periplasmic-facing. The helical transmembrane segment at 39 to 61 (LALAALLAVIWGAYLLQLAATLL) threads the bilayer. Residues 62 to 74 (KRRAGVVRDRTPK) lie on the Cytoplasmic side of the membrane. Residues 75–94 (IAIDVLAVLVPLAAFLLDGS) form a helical membrane-spanning segment. Residues 95–112 (PDWSLYCAVWLLKPLRDS) traverse the membrane as a helical segment. The Cytoplasmic segment spans residues 113–129 (TFFPVLGRVLANEARNL). The helical transmembrane segment at 130–150 (IGVTTLFGVVLFAVALAAYVI) threads the bilayer. The Periplasmic portion of the chain corresponds to 151-161 (ERDIQPEKFGS). The pore-forming intramembrane region spans 162–180 (IPQAMWWAVVTLSTTGYGD). The short motif at 175-180 (TTGYGD) is the Selectivity filter element. Residues 181–185 (TIPQS) lie on the Periplasmic side of the membrane. Residues 186–210 (FAGRVLAGAVMMSGIGIFGLWAGIL) traverse the membrane as a helical segment. Topologically, residues 211 to 355 (ATGFYQEVRR…LERRGAAASA (145 aa)) are cytoplasmic. 3',5'-cyclic AMP-binding positions include 297–298 (GE), 307–308 (RS), and Arg-348.

It belongs to the potassium channel family. Homotetramer.

It localises to the cell membrane. Its function is as follows. Cyclic nucleotide-regulated potassium channel activated by cAMP. In Mesorhizobium japonicum (strain LMG 29417 / CECT 9101 / MAFF 303099) (Mesorhizobium loti (strain MAFF 303099)), this protein is Cyclic nucleotide-gated potassium channel mll3241.